The sequence spans 480 residues: Chromosomal replication initiator protein DnaA (480 aa).

The segment at 1-71 (MRHDALFERV…TTLVQQEDSE (71 aa)) is domain I, interacts with DnaA modulators. The interval 71-137 (EILKVEILVR…RPVQAPLFGS (67 aa)) is domain II. A domain III, AAA+ region region spans residues 138 to 360 (PLDQRYGFDS…GAFNQLLFRR (223 aa)). Residues Gly184, Gly186, Lys187, and Thr188 each contribute to the ATP site. The segment at 361–480 (SFEPQLSIER…IELLKRLINE (120 aa)) is domain IV, binds dsDNA.

The protein belongs to the DnaA family. Oligomerizes as a right-handed, spiral filament on DNA at oriC.

The protein localises to the cytoplasm. Functionally, plays an essential role in the initiation and regulation of chromosomal replication. ATP-DnaA binds to the origin of replication (oriC) to initiate formation of the DNA replication initiation complex once per cell cycle. Binds the DnaA box (a 9 base pair repeat at the origin) and separates the double-stranded (ds)DNA. Forms a right-handed helical filament on oriC DNA; dsDNA binds to the exterior of the filament while single-stranded (ss)DNA is stabiized in the filament's interior. The ATP-DnaA-oriC complex binds and stabilizes one strand of the AT-rich DNA unwinding element (DUE), permitting loading of DNA polymerase. After initiation quickly degrades to an ADP-DnaA complex that is not apt for DNA replication. Binds acidic phospholipids. The protein is Chromosomal replication initiator protein DnaA of Rhizobium meliloti (strain 1021) (Ensifer meliloti).